The primary structure comprises 247 residues: ATP synthase subunit a, chloroplastic (247 aa).

The next 5 helical transmembrane spans lie at 38-58 (QVLI…ALAV), 95-115 (VPFI…GALL), 134-154 (INTT…AGLA), 199-219 (LVVV…VMFL), and 220-240 (GLFT…AYIG).

Belongs to the ATPase A chain family. In terms of assembly, F-type ATPases have 2 components, CF(1) - the catalytic core - and CF(0) - the membrane proton channel. CF(1) has five subunits: alpha(3), beta(3), gamma(1), delta(1), epsilon(1). CF(0) has four main subunits: a, b, b' and c.

It localises to the plastid. The protein resides in the chloroplast thylakoid membrane. In terms of biological role, key component of the proton channel; it plays a direct role in the translocation of protons across the membrane. This Trachelium caeruleum (Blue throatwort) protein is ATP synthase subunit a, chloroplastic.